Here is an 88-residue protein sequence, read N- to C-terminus: Phosphocarrier protein HPr (88 aa).

The HPr domain maps to 1–88; sequence MEKKEFHIVA…ETLQKEGLAE (88 aa). His15 serves as the catalytic Pros-phosphohistidine intermediate. The residue at position 46 (Ser46) is a Phosphoserine; by HPrK/P.

Belongs to the HPr family. As to quaternary structure, monomer.

It is found in the cytoplasm. Phosphorylation on Ser-46 inhibits the phosphoryl transfer from enzyme I to HPr. In terms of biological role, general (non sugar-specific) component of the phosphoenolpyruvate-dependent sugar phosphotransferase system (sugar PTS). This major carbohydrate active-transport system catalyzes the phosphorylation of incoming sugar substrates concomitantly with their translocation across the cell membrane. The phosphoryl group from phosphoenolpyruvate (PEP) is transferred to the phosphoryl carrier protein HPr by enzyme I. Phospho-HPr then transfers it to the PTS EIIA domain. Its function is as follows. P-Ser-HPr interacts with the catabolite control protein A (CcpA), forming a complex that binds to DNA at the catabolite response elements cre, operator sites preceding a large number of catabolite-regulated genes. Thus, P-Ser-HPr is a corepressor in carbon catabolite repression (CCR), a mechanism that allows bacteria to coordinate and optimize the utilization of available carbon sources. P-Ser-HPr also plays a role in inducer exclusion, in which it probably interacts with several non-PTS permeases and inhibits their transport activity. This chain is Phosphocarrier protein HPr (ptsH), found in Enterococcus faecalis (strain ATCC 700802 / V583).